A 224-amino-acid polypeptide reads, in one-letter code: Endonuclease NucS (224 aa).

The protein belongs to the NucS endonuclease family.

Its subcellular location is the cytoplasm. Its function is as follows. Cleaves both 3' and 5' ssDNA extremities of branched DNA structures. The polypeptide is Endonuclease NucS (Mycolicibacterium smegmatis (strain ATCC 700084 / mc(2)155) (Mycobacterium smegmatis)).